Consider the following 330-residue polypeptide: Phosphate acyltransferase (330 aa).

Belongs to the PlsX family. In terms of assembly, homodimer. Probably interacts with PlsY.

Its subcellular location is the cytoplasm. The enzyme catalyses a fatty acyl-[ACP] + phosphate = an acyl phosphate + holo-[ACP]. It participates in lipid metabolism; phospholipid metabolism. In terms of biological role, catalyzes the reversible formation of acyl-phosphate (acyl-PO(4)) from acyl-[acyl-carrier-protein] (acyl-ACP). This enzyme utilizes acyl-ACP as fatty acyl donor, but not acyl-CoA. The protein is Phosphate acyltransferase of Campylobacter hominis (strain ATCC BAA-381 / DSM 21671 / CCUG 45161 / LMG 19568 / NCTC 13146 / CH001A).